The following is a 124-amino-acid chain: uncharacterized protein (124 aa).

A run of 3 helical transmembrane segments spans residues 14–34, 41–61, and 85–105; these read KAIV…YGWQ, FSYG…IIFY, and MVFI…AFFV.

The protein resides in the cell membrane. This is an uncharacterized protein from Haemophilus influenzae (strain ATCC 51907 / DSM 11121 / KW20 / Rd).